The sequence spans 803 residues: Translation initiation factor IF-2 (803 aa).

Basic and acidic residues predominate over residues 65–75 (PDKVEEKKEHT). The interval 65-186 (PDKVEEKKEH…PKSRKSKTLK (122 aa)) is disordered. Residues 175 to 185 (NKPKSRKSKTL) show a composition bias toward basic residues. Residues 300–468 (IRPPVVTIMG…ILLTADAALE (169 aa)) enclose the tr-type G domain. The tract at residues 309–316 (GHVDHGKT) is G1. Residue 309-316 (GHVDHGKT) participates in GTP binding. The G2 stretch occupies residues 334 to 338 (GITQH). Positions 355–358 (DTPG) are G3. GTP-binding positions include 355–359 (DTPGH) and 409–412 (NKID). Residues 409 to 412 (NKID) are G4. The G5 stretch occupies residues 445–447 (SAK).

This sequence belongs to the TRAFAC class translation factor GTPase superfamily. Classic translation factor GTPase family. IF-2 subfamily.

It localises to the cytoplasm. Its function is as follows. One of the essential components for the initiation of protein synthesis. Protects formylmethionyl-tRNA from spontaneous hydrolysis and promotes its binding to the 30S ribosomal subunits. Also involved in the hydrolysis of GTP during the formation of the 70S ribosomal complex. The sequence is that of Translation initiation factor IF-2 from Tropheryma whipplei (strain TW08/27) (Whipple's bacillus).